A 329-amino-acid polypeptide reads, in one-letter code: UDP-N-acetylenolpyruvoylglucosamine reductase (329 aa).

Residues 28–192 enclose the FAD-binding PCMH-type domain; sequence RVGGPADLLC…ARVEVRLHAG (165 aa). Arginine 172 is a catalytic residue. The disordered stretch occupies residues 202 to 227; the sequence is REDRERRRATQPLDRPTFGSTFTNPP. The active-site Proton donor is the serine 221. Residue glutamate 291 is part of the active site. Positions 307–329 are disordered; it reads DGHAAAGGGPGAASGGVRPPEAT. Gly residues predominate over residues 311–320; sequence AAGGGPGAAS.

This sequence belongs to the MurB family. FAD is required as a cofactor.

Its subcellular location is the cytoplasm. It carries out the reaction UDP-N-acetyl-alpha-D-muramate + NADP(+) = UDP-N-acetyl-3-O-(1-carboxyvinyl)-alpha-D-glucosamine + NADPH + H(+). It participates in cell wall biogenesis; peptidoglycan biosynthesis. Cell wall formation. This chain is UDP-N-acetylenolpyruvoylglucosamine reductase, found in Anaeromyxobacter sp. (strain K).